A 23-amino-acid chain; its full sequence is Elongation factor Tu (23 aa).

Belongs to the GTP-binding elongation factor family. EF-Tu/EF-1A subfamily. In terms of assembly, monomer. In terms of processing, the N-terminus is blocked. The C-terminus may be subjected to proteolysis.

It is found in the cytoplasm. This protein promotes the GTP-dependent binding of aminoacyl-tRNA to the A-site of ribosomes during protein biosynthesis. The chain is Elongation factor Tu (tuf) from Delftia acidovorans (Pseudomonas acidovorans).